The following is a 546-amino-acid chain: Chaperonin GroEL 1 (546 aa).

ATP contacts are provided by residues 30 to 33, lysine 51, 87 to 91, glycine 415, 479 to 481, and aspartate 495; these read TLGP, DGTTT, and NAA. The tract at residues 526–546 is disordered; the sequence is KEDAPMPGGMPGGMGGMGMDM. A compositionally biased stretch (gly residues) spans 534 to 546; the sequence is GMPGGMGGMGMDM.

This sequence belongs to the chaperonin (HSP60) family. Forms a cylinder of 14 subunits composed of two heptameric rings stacked back-to-back. Interacts with the co-chaperonin GroES.

The protein localises to the cytoplasm. It catalyses the reaction ATP + H2O + a folded polypeptide = ADP + phosphate + an unfolded polypeptide.. Together with its co-chaperonin GroES, plays an essential role in assisting protein folding. The GroEL-GroES system forms a nano-cage that allows encapsulation of the non-native substrate proteins and provides a physical environment optimized to promote and accelerate protein folding. The sequence is that of Chaperonin GroEL 1 from Burkholderia pseudomallei (strain 1106a).